The sequence spans 193 residues: dTTP/UTP pyrophosphatase (193 aa).

The Proton acceptor role is filled by D77.

The protein belongs to the Maf family. YhdE subfamily. A divalent metal cation serves as cofactor.

It is found in the cytoplasm. The catalysed reaction is dTTP + H2O = dTMP + diphosphate + H(+). It catalyses the reaction UTP + H2O = UMP + diphosphate + H(+). Nucleoside triphosphate pyrophosphatase that hydrolyzes dTTP and UTP. May have a dual role in cell division arrest and in preventing the incorporation of modified nucleotides into cellular nucleic acids. This is dTTP/UTP pyrophosphatase from Bacteroides fragilis (strain YCH46).